The sequence spans 637 residues: Cell division cycle-related protein res1/sct1 (637 aa).

Residues 6 to 112 enclose the HTH APSES-type domain; that stretch reads IHKITYSGVE…YSGSAFMPMS (107 aa). Residues 37–58 constitute a DNA-binding region (H-T-H motif); that stretch reads ATQILKIAELDKPRRTRILEKF. Residues 114–137 form a disordered region; sequence FTPQSNRKPTEAYRRNSPVKKSFS. 2 ANK repeats span residues 236–265 and 357–386; these read DGHT…NVVA and HGDT…SSSI.

DSC1 contains cdc10 and sct1/res1.

Acts as a positive regulator of the mitotic cell cycle and as a negative regulator of sexual differentiation. May be involved in the transcriptional regulation of the cdc22 and cdt1 genes. Is an integral component of the DSC1-like complex. The chain is Cell division cycle-related protein res1/sct1 (res1) from Schizosaccharomyces pombe (strain 972 / ATCC 24843) (Fission yeast).